The sequence spans 470 residues: MAAAAAAASVASQAQAVLRGRLCDQAVVHSALRSSPDTNYSKLKYLVASSVSEACNNSVLLLGPRGCGKAAVRFSFLVYSSAPLSAVFSDAGVVFDEMCQWAIYDFTLWVVSAWTEVVDMVLDDLKKDHPDAISVIRLNGMLHSDDNCATKEIARQLCLEHQLSFSKMASSDDNTEFMIDMLRECGLAHKTIIFVLEEFDLFAQGKQRLLYSLLDAMQSLTSQAVVIGVSCRLDADQLLEKRVRSRFSHRKLLFVPSSVDSLQRLMEHLLALPEDSPLPTKYVREYNARITSIFNDKKFKGILSSLTDADATTSHILRFLFRVVSYMDIDSGLLSMQSFMNALSSMQRQPKMDSLQDLSILELYILVCMNRLEDKEKSSYNFITIMKEYKSVQDAYKTSDKYSHTVCFRAFEHLLDRELISFADNKGRNQALEYRPVKLLISSRELAESLKLNTTCPAVLQKLLDRERYM.

Gly-63–Ala-70 serves as a coordination point for ATP.

This sequence belongs to the ORC4 family. As to quaternary structure, component of the origin recognition complex (ORC) composed of at least ORC1, ORC2, ORC3, ORC4, ORC5 and ORC6. ORC is regulated in a cell-cycle and development dependent manner. It is sequentially assembled at the exit from anaphase of mitosis and disassembled as cells enter S phase. In terms of tissue distribution, expressed in the shoot apical meristem (SAM), leaves, ears and roots (including root tips).

Its subcellular location is the nucleus. Functionally, component of the origin recognition complex (ORC) that binds origins of replication. DNA-binding is ATP-dependent. The specific DNA sequences that define origins of replication have not been identified yet. ORC is required to assemble the pre-replication complex necessary to initiate DNA replication. This is Origin of replication complex subunit 4 from Oryza sativa subsp. japonica (Rice).